Consider the following 436-residue polypeptide: Cytochrome P450 monooxygenase phqO (436 aa).

Cys377 serves as a coordination point for heme.

It belongs to the cytochrome P450 family. Heme is required as a cofactor.

The protein operates within alkaloid biosynthesis. In terms of biological role, cytochrome P450 monooxygenase; part of the gene cluster that mediates the biosynthesis of paraherquamide, a fungal indole alkaloid that belongs to a family of natural products containing a characteristic bicyclo[2.2.2]diazaoctane core. The first steps in the biosynthesis of paraherquamide is the production of the beta-methyl-proline precursor from L-isoleucine. They require oxidation of a terminally hydroxylated L-isoleucine to the corresponding aldehyde by enzymes which have still to be identified. Spontaneous cyclization and dehydration would yield the 4-methyl pyrolline-5-carboxylic acid, which is then reduced by the pyrroline-5-carboxylate reductase phqD leading to the beta-methyl-proline precursor. The next step of paraherquamide biosynthesis involves coupling of beta-methyl-proline and L-tryptophan by the bimodular NRPS phqB, to produce a monooxopiperazine intermediate. The reductase (R) domain of phqB utilizes NADPH for hydride transfer to reduce the thioester bond of the T domain-tethered linear dipeptide to a hemithioaminal intermediate, which spontaneously cleaves the C-S bond to release the aldehyde product. This compound undergoes spontaneous cyclization and dehydration to give a dienamine which is reverse prenylated at C-2 by the reverse prenyltransferase phqJ. The other prenyltransferase present in the cluster, phqI may be a redundant gene in the pathway. During biosynthetic assembly, the key step to produce the polycyclic core is catalyzed by the bifunctional reductase and intramolecular [4+2] Diels-Alderase, phqE, resulting in formation of the [2.2.2] diazaoctane intermediate preparaherquamide. Following formation of preparaherquamide, an indole 2,3-epoxidation-initiated pinacol-like rearrangement is catalyzed by the phqK FAD-dependent monooxygenase. The prenyltransferase phqA, the cytochrome P450 monooxygenase phqL, and the FAD-linked oxidoreductase phqH (or the cytochrome P450 monooxygenase phqM), are proposed to be involved in the formation of the pyran ring. The FAD-dependent monooxygenase phqK is likely responsible for generation of the spiro-oxindole, and the N-methylation is likely mediated by the phqN methyltransferase leading to the isolable natural product paraherquamide F. However, the order of these biosynthetic steps has still to be determined. In late-stage paraherquamide biosynthesis, the third P450 monooxygenase, phqO, is probably responsible for the C-14 hydroxylation, transforming paraherquamide F to paraherquamide G, and paraherquamide E to the final product paraherquamide A. The expansion from the 6-membered ring pyran (in paraherquamides F and G) to the 7-membered dioxepin ring (in paraherquamides A and E) represents a poorly understood but intriguing process that probably involves the 2-oxoglutarate-dependent dioxygenase phqC. Finally, the remaining members of the paraherquamide cluster, including phqI as well as phqM (or phqH), do not have a clearly prescribed role and appear to be redundant. In Penicillium fellutanum, this protein is Cytochrome P450 monooxygenase phqO.